The following is a 469-amino-acid chain: ATP-dependent protease ATPase subunit HslU (469 aa).

ATP is bound by residues Ile-24, 66–71, Asp-282, Glu-347, and Arg-419; that span reads GVGKTE.

It belongs to the ClpX chaperone family. HslU subfamily. A double ring-shaped homohexamer of HslV is capped on each side by a ring-shaped HslU homohexamer. The assembly of the HslU/HslV complex is dependent on binding of ATP.

It is found in the cytoplasm. ATPase subunit of a proteasome-like degradation complex; this subunit has chaperone activity. The binding of ATP and its subsequent hydrolysis by HslU are essential for unfolding of protein substrates subsequently hydrolyzed by HslV. HslU recognizes the N-terminal part of its protein substrates and unfolds these before they are guided to HslV for hydrolysis. This chain is ATP-dependent protease ATPase subunit HslU, found in Listeria monocytogenes serovar 1/2a (strain ATCC BAA-679 / EGD-e).